The following is a 914-amino-acid chain: Ubiquitin carboxyl-terminal hydrolase 20 (914 aa).

A UBP-type zinc finger spans residues 6-111 (DLCPHLDSIG…GSSSKFSEQD (106 aa)). 12 residues coordinate Zn(2+): Cys8, His10, Cys30, Cys33, Cys43, Cys48, Cys53, His60, His64, His70, Cys83, and Cys86. Phosphoserine occurs at positions 112, 132, and 134. Positions 145–685 (TGMKNLGNSC…EGYVLFYRKS (541 aa)) constitute a USP domain. Cys154 acts as the Nucleophile in catalysis. 2 disordered regions span residues 257-347 (LTEA…VDED) and 360-415 (QPAE…ASPV). Thr258 is modified (phosphothreonine). Residues 259-279 (EARDSDSSDTDEKREGDRSPS) show a composition bias toward basic and acidic residues. At Ser305 the chain carries Phosphoserine. Residues 316-332 (EAGRAISEKERMKDRKF) show a composition bias toward basic and acidic residues. Ser368 bears the Phosphoserine mark. Thr377 carries the post-translational modification Phosphothreonine. Phosphoserine occurs at positions 408 and 413. His643 functions as the Proton acceptor in the catalytic mechanism. 2 DUSP domains span residues 687–780 (EEAM…LYVC) and 789–892 (ALAK…RQSV).

This sequence belongs to the peptidase C19 family. USP20/USP33 subfamily. As to quaternary structure, interacts with VHL, leading to its ubiquitination and subsequent degradation. Interacts with CCP110. Interacts with DIO2. Interacts with HIF1A. Interacts with ADRB2. Interacts with USP18. Post-translationally, ubiquitinated via a VHL-dependent pathway for proteasomal degradation.

The protein localises to the cytoplasm. Its subcellular location is the endoplasmic reticulum. It localises to the perinuclear region. It is found in the cytoskeleton. The protein resides in the microtubule organizing center. The protein localises to the centrosome. The catalysed reaction is Thiol-dependent hydrolysis of ester, thioester, amide, peptide and isopeptide bonds formed by the C-terminal Gly of ubiquitin (a 76-residue protein attached to proteins as an intracellular targeting signal).. Its function is as follows. Deubiquitinating enzyme that plays a role in many cellular processes including autophagy, cellular antiviral response or membrane protein biogenesis. Attenuates TLR4-mediated NF-kappa-B signaling by cooperating with beta-arrestin-2/ARRB2 and inhibiting TRAF6 autoubiquitination. Promotes cellular antiviral responses by deconjugating 'Lys-33' and 'Lys-48'-linked ubiquitination of STING1 leading to its stabilization. Plays an essential role in autophagy induction by regulating the ULK1 stability through deubiquitination of ULK1. Acts as a positive regulator for NF-kappa-B activation by TNF-alpha through deubiquitinating 'Lys-48'-linked polyubiquitination of SQSTM1, leading to its increased stability. Acts as a regulator of G-protein coupled receptor (GPCR) signaling by mediating the deubiquitination beta-2 adrenergic receptor (ADRB2). Plays a central role in ADRB2 recycling and resensitization after prolonged agonist stimulation by constitutively binding ADRB2, mediating deubiquitination of ADRB2 and inhibiting lysosomal trafficking of ADRB2. Upon dissociation, it is probably transferred to the translocated beta-arrestins, possibly leading to beta-arrestins deubiquitination and disengagement from ADRB2. This suggests the existence of a dynamic exchange between the ADRB2 and beta-arrestins. Deubiquitinates DIO2, thereby regulating thyroid hormone regulation. Deubiquitinates HIF1A, leading to stabilize HIF1A and enhance HIF1A-mediated activity. Deubiquitinates MCL1, a pivotal member of the anti-apoptotic Bcl-2 protein family to regulate its stability. Within the endoplasmic reticulum, participates with USP33 in the rescue of post-translationally targeted membrane proteins that are inappropriately ubiquitinated by the cytosolic protein quality control in the cytosol. This Homo sapiens (Human) protein is Ubiquitin carboxyl-terminal hydrolase 20 (USP20).